A 492-amino-acid polypeptide reads, in one-letter code: Probable serine/threonine-protein kinase WNK9 (492 aa).

Residues 25-282 enclose the Protein kinase domain; it reads GRYNEVLGKG…ACELLDDHFL (258 aa). Residues 105 to 108 and K155 each bind ATP; that span reads TEMF. D172 serves as the catalytic Proton acceptor.

This sequence belongs to the protein kinase superfamily. Ser/Thr protein kinase family. WNK subfamily.

It catalyses the reaction L-seryl-[protein] + ATP = O-phospho-L-seryl-[protein] + ADP + H(+). The catalysed reaction is L-threonyl-[protein] + ATP = O-phospho-L-threonyl-[protein] + ADP + H(+). Its function is as follows. May regulate flowering time by modulating the photoperiod pathway. This is Probable serine/threonine-protein kinase WNK9 (WNK9) from Arabidopsis thaliana (Mouse-ear cress).